We begin with the raw amino-acid sequence, 98 residues long: Small ribosomal subunit protein bS18 (98 aa).

This sequence belongs to the bacterial ribosomal protein bS18 family. Part of the 30S ribosomal subunit. Forms a tight heterodimer with protein bS6.

Its function is as follows. Binds as a heterodimer with protein bS6 to the central domain of the 16S rRNA, where it helps stabilize the platform of the 30S subunit. This Flavobacterium psychrophilum (strain ATCC 49511 / DSM 21280 / CIP 103535 / JIP02/86) protein is Small ribosomal subunit protein bS18.